Consider the following 83-residue polypeptide: Three-finger toxin W-IV (83 aa).

The N-terminal stretch at 1 to 21 (MKTLLLTLVVVTIVCLDLGHT) is a signal peptide. Intrachain disulfides connect Cys24/Cys45, Cys38/Cys62, Cys64/Cys75, and Cys76/Cys81.

The protein belongs to the three-finger toxin family. Short-chain subfamily. Type I alpha-neurotoxin sub-subfamily. As to expression, expressed by the venom gland.

Its subcellular location is the secreted. Binds to muscle nicotinic acetylcholine receptor (nAChR) and inhibit acetylcholine from binding to the receptor, thereby impairing neuromuscular transmission. The polypeptide is Three-finger toxin W-IV (Walterinnesia aegyptia (Desert black snake)).